A 541-amino-acid polypeptide reads, in one-letter code: Zinc finger protein 329 (541 aa).

At Ser50 the chain carries Phosphoserine. C2H2-type zinc fingers lie at residues 203–225, 231–253, 259–281, 287–309, 315–337, 343–365, 371–393, 399–421, 427–449, 455–477, 483–505, and 511–533; these read YRCTECGKCFKRNSSLVLHHRTH, YTCNECGKSFSKNYNLIVHQRIH, YECSKCGKAFSDGSALTQHQRIH, YECLECGKTFNRNSSLILHQRTH, YRCNECGKPFTDISHLTVHLRIH, YECSKCGKAFRDGSYLTQHERTH, FECAECGKSFNRNSHLIVHQKIH, YECKECGKTFIESAYLIRHQRIH, YGCNQCQKLFRNIAGLIRHQRTH, YECNQCGKAFRDSSCLTKHQRIH, YQCPECGKSFKQNSHLAVHQRLH, and SRCPQCGKMFQKSSSLVRHQRAH.

The protein belongs to the krueppel C2H2-type zinc-finger protein family.

It localises to the nucleus. May be involved in transcriptional regulation. This chain is Zinc finger protein 329 (ZNF329), found in Homo sapiens (Human).